Consider the following 383-residue polypeptide: ATP phosphoribosyltransferase regulatory subunit (383 aa).

This sequence belongs to the class-II aminoacyl-tRNA synthetase family. HisZ subfamily. As to quaternary structure, heteromultimer composed of HisG and HisZ subunits.

It is found in the cytoplasm. It participates in amino-acid biosynthesis; L-histidine biosynthesis; L-histidine from 5-phospho-alpha-D-ribose 1-diphosphate: step 1/9. Required for the first step of histidine biosynthesis. May allow the feedback regulation of ATP phosphoribosyltransferase activity by histidine. In Desulfitobacterium hafniense (strain DSM 10664 / DCB-2), this protein is ATP phosphoribosyltransferase regulatory subunit.